The primary structure comprises 1157 residues: DNA-directed RNA polymerase subunit beta (1157 aa).

This sequence belongs to the RNA polymerase beta chain family. In terms of assembly, the RNAP catalytic core consists of 2 alpha, 1 beta, 1 beta' and 1 omega subunit. When a sigma factor is associated with the core the holoenzyme is formed, which can initiate transcription.

The enzyme catalyses RNA(n) + a ribonucleoside 5'-triphosphate = RNA(n+1) + diphosphate. Functionally, DNA-dependent RNA polymerase catalyzes the transcription of DNA into RNA using the four ribonucleoside triphosphates as substrates. This Tropheryma whipplei (strain TW08/27) (Whipple's bacillus) protein is DNA-directed RNA polymerase subunit beta.